The following is a 220-amino-acid chain: Protein-L-isoaspartate O-methyltransferase (220 aa).

The active site involves Ser-65.

It belongs to the methyltransferase superfamily. L-isoaspartyl/D-aspartyl protein methyltransferase family.

It is found in the cytoplasm. It catalyses the reaction [protein]-L-isoaspartate + S-adenosyl-L-methionine = [protein]-L-isoaspartate alpha-methyl ester + S-adenosyl-L-homocysteine. In terms of biological role, catalyzes the methyl esterification of L-isoaspartyl residues in peptides and proteins that result from spontaneous decomposition of normal L-aspartyl and L-asparaginyl residues. It plays a role in the repair and/or degradation of damaged proteins. This Pyrococcus horikoshii (strain ATCC 700860 / DSM 12428 / JCM 9974 / NBRC 100139 / OT-3) protein is Protein-L-isoaspartate O-methyltransferase (pcm).